Consider the following 427-residue polypeptide: 3-phosphoshikimate 1-carboxyvinyltransferase (427 aa).

Lys22, Ser23, and Arg27 together coordinate 3-phosphoshikimate. A phosphoenolpyruvate-binding site is contributed by Lys22. Residues Gly96 and Arg124 each contribute to the phosphoenolpyruvate site. 3-phosphoshikimate contacts are provided by Ser169, Ser170, Gln171, Ser197, Asp313, Asn336, and Lys340. A phosphoenolpyruvate-binding site is contributed by Gln171. Asp313 functions as the Proton acceptor in the catalytic mechanism. Phosphoenolpyruvate is bound by residues Arg344, Arg386, and Lys411.

This sequence belongs to the EPSP synthase family. In terms of assembly, monomer.

The protein localises to the cytoplasm. It catalyses the reaction 3-phosphoshikimate + phosphoenolpyruvate = 5-O-(1-carboxyvinyl)-3-phosphoshikimate + phosphate. The protein operates within metabolic intermediate biosynthesis; chorismate biosynthesis; chorismate from D-erythrose 4-phosphate and phosphoenolpyruvate: step 6/7. In terms of biological role, catalyzes the transfer of the enolpyruvyl moiety of phosphoenolpyruvate (PEP) to the 5-hydroxyl of shikimate-3-phosphate (S3P) to produce enolpyruvyl shikimate-3-phosphate and inorganic phosphate. The sequence is that of 3-phosphoshikimate 1-carboxyvinyltransferase from Salmonella newport (strain SL254).